Here is a 570-residue protein sequence, read N- to C-terminus: Serine/threonine-protein kinase Pink1, mitochondrial (570 aa).

A mitochondrion-targeting transit peptide spans 1–5 (MSVRA). At 6-96 (VGSRLFKHGR…AELRKKATRR (91 aa)) the chain is on the mitochondrial intermembrane side. A helical transmembrane segment spans residues 97 to 120 (ILFGDSAPFFALVGVSIASGTGIL). Over 121-570 (TKEEELEGVC…WIQENLPELD (450 aa)) the chain is Cytoplasmic. The Protein kinase domain occupies 162–484 (LSLGKPIAKG…VAANVCQLFL (323 aa)). K196 is an ATP binding site. S205 carries the phosphoserine; by autocatalysis modification. Mg(2+) is bound at residue E217. ATP contacts are provided by K295, Y297, and N300. D337 functions as the Proton acceptor in the catalytic mechanism. D341 is an ATP binding site. Mg(2+) contacts are provided by N342 and D359. Residue D359 participates in ATP binding. S377 is modified (phosphoserine; by autocatalysis). T386 bears the Phosphothreonine; by autocatalysis mark. Phosphothreonine is present on T530.

The protein belongs to the protein kinase superfamily. Ser/Thr protein kinase family. Mg(2+) is required as a cofactor. In terms of processing, proteolytically cleaved. In healthy cells, the precursor is continuously imported into mitochondria where it is proteolytically cleaved into its short form by the mitochondrial rhomboid protease rho-7 (TcasGA2_TC013516). The short form is then released into the cytosol where it rapidly undergoes proteasome-dependent degradation. In unhealthy cells, when cellular stress conditions lead to the loss of mitochondrial membrane potential, mitochondrial import is impaired leading to the precursor accumulating on the outer mitochondrial membrane (OMM). Autophosphorylated on Ser-205, which activates kinase activity and is required for substrate recognition. Loss of mitochondrial membrane potential results in the precursor accumulating on the outer mitochondrial membrane (OMM) where it is activated by autophosphorylation at Ser-205. Autophosphorylation is sufficient and essential for selective recruitment of park to depolarized mitochondria, likely via Pink1-dependent phosphorylation of polyubiquitin chains. Also autophosphorylated at Ser-377, Thr-386 and possibly Thr-530. Another report found evidence of autophosphorylation at Ser-154, Thr-186, Thr-218, Ser-267 and Thr-530, as well as a number of other minor sites, but determined that phosphorylation at these sites is not required for enzyme activity and may not occur in vivo.

The protein resides in the mitochondrion outer membrane. Its subcellular location is the mitochondrion inner membrane. The protein localises to the cytoplasm. It is found in the cytosol. It carries out the reaction L-seryl-[protein] + ATP = O-phospho-L-seryl-[protein] + ADP + H(+). It catalyses the reaction L-threonyl-[protein] + ATP = O-phospho-L-threonyl-[protein] + ADP + H(+). In terms of biological role, acts as a serine/threonine-protein kinase. Exhibits a substrate preference for proline at position P+1 and a general preference at several residues for basic residues such as arginine. Also exhibits moderate preferences for a phosphotyrosine at position P-3 and a tryptophan at P-5. Critical to mitochondrial homeostasis it mediates several pathways that maintain mitochondrial health and function. Protects against mitochondrial dysfunction during cellular stress by phosphorylating mitochondrial proteins such as park and likely Drp1, to coordinate mitochondrial quality control mechanisms that remove and replace dysfunctional mitochondrial components. Depending on the severity of mitochondrial damage and/or dysfunction, activity ranges from preventing apoptosis and stimulating mitochondrial biogenesis to regulating mitochondrial dynamics and eliminating severely damaged mitochondria via mitophagy. Appears to be particularly important in maintaining the physiology and function of cells with high energy demands that are undergoing stress or altered metabolic environment, including spermatids, muscle cells and neurons such as the dopaminergic (DA) neurons. Mediates the translocation and activation of park at the outer membrane (OMM) of dysfunctional/depolarized mitochondria. At the OMM of damaged mitochondria, phosphorylates pre-existing polyubiquitin chains, the Pink1-phosphorylated polyubiquitin then recruits park from the cytosol to the OMM where park is fully activated by phosphorylation at 'Ser-80' by Pink1. When cellular stress results in irreversible mitochondrial damage, functions with park to promote the clearance of dysfunctional and/or depolarized mitochondria by selective autophagy (mitophagy). The Pink1-park pathway also promotes fission and/or inhibits fusion of damaged mitochondria, by phosphorylating and thus promoting the park-dependent degradation of proteins involved in mitochondrial fusion/fission such as Marf, Opa1 and fzo. This prevents the refusion of unhealthy mitochondria with the mitochondrial network or initiates mitochondrial fragmentation facilitating their later engulfment by autophagosomes. Also likely to promote mitochondrial fission independently of park and Atg7-mediated mitophagy, via the phosphorylation and activation of Drp1. Regulates motility of damaged mitochondria by phosphorylating Miro which likely promotes its park-dependent degradation by the proteasome; in motor neurons, this inhibits mitochondrial intracellular anterograde transport along the axons which probably increases the chance of the mitochondria being eliminated in the soma. The Pink1-park pathway is also involved in mitochondrial regeneration processes such as promoting mitochondrial biogenesis, activating localized mitochondrial repair, promoting selective turnover of mitochondrial proteins and initiating the mitochondrial import of endogenous proteins. Involved in mitochondrial biogenesis by promoting the park-dependent ubiquitination of transcriptional repressor Paris which leads to its subsequent proteasomal degradation and allows activation of the transcription factor srl. Functions with park to promote localized mitochondrial repair by activating the translation of specific nuclear-encoded mitochondrial RNAs (nc-mtRNAs) on the mitochondrial surface, including several key electron transport chain component nc-mtRNAs. During oogenesis, phosphorylates and inactivates larp on the membrane of defective mitochondria, thus impairing local translation and mtDNA replication and consequently, reducing transmission of deleterious mtDNA mutations to the mature oocyte. Phosphorylates the mitochondrial acyl-CoA dehydrogenase Mcad, and appears to be important for maintaining fatty acid and amino acid metabolism via a mechanism that is independent of it's role in maintaining production of ATP. The polypeptide is Serine/threonine-protein kinase Pink1, mitochondrial (Tribolium castaneum (Red flour beetle)).